The chain runs to 492 residues: MVPREQAEEAIVADSNGKEEEVGVMGVSAGEHGADDHHGGGGKFSMKNLLWHGGSVWDAWFSCASNQVAQVLLTLPYSFSQLGMLSGVLLQLFYGFMGSWTAYLISVLYVEYRSRKEKEGVSFKNHVIQWFEVLDGLLGPYWKAAGLAFNCTFLLFGSVIQLIACASNIYYINDRLDKRTWTYIFGACCATTVFIPSFHNYRIWSFLGLGMTTYTAWYLAIAALLNGQAEGITHTGPTKLVLYFTGATNILYTFGGHAVTVEIMHAMWKPAKFKYIYLLATLYVFTLTLPSASAMYWAFGDELLTHSNAFSLLPKTGWRDAAVILMLIHQFITFGFACTPLYFVWEKVIGMHDTKSICLRALARLPIVVPIWFLAIIFPFFGPINSAVGALLVSFTVYIIPALAHILTYRTASARMNAAEKPPFFLPSWTGMFVLNMFIVVWVLVVGFGLGGWASMVNFIRQIDTFGLFAKCYQCPKPAPALAQSPVPLPHH.

At 1–67 the chain is on the cytoplasmic side; the sequence is MVPREQAEEA…DAWFSCASNQ (67 aa). A helical membrane pass occupies residues 68-85; sequence VAQVLLTLPYSFSQLGML. At 86 to 87 the chain is on the extracellular side; the sequence is SG. A helical membrane pass occupies residues 88–108; it reads VLLQLFYGFMGSWTAYLISVL. Residues 109–143 lie on the Cytoplasmic side of the membrane; it reads YVEYRSRKEKEGVSFKNHVIQWFEVLDGLLGPYWK. The chain crosses the membrane as a helical span at residues 144 to 164; the sequence is AAGLAFNCTFLLFGSVIQLIA. At 165-180 the chain is on the extracellular side; that stretch reads CASNIYYINDRLDKRT. The chain crosses the membrane as a helical span at residues 181-201; it reads WTYIFGACCATTVFIPSFHNY. Arginine 202 is a topological domain (cytoplasmic). A helical membrane pass occupies residues 203–223; sequence IWSFLGLGMTTYTAWYLAIAA. The Extracellular portion of the chain corresponds to 224–240; sequence LLNGQAEGITHTGPTKL. A helical membrane pass occupies residues 241–261; the sequence is VLYFTGATNILYTFGGHAVTV. The Cytoplasmic portion of the chain corresponds to 262 to 274; that stretch reads EIMHAMWKPAKFK. Residues 275-295 traverse the membrane as a helical segment; it reads YIYLLATLYVFTLTLPSASAM. Over 296-322 the chain is Extracellular; sequence YWAFGDELLTHSNAFSLLPKTGWRDAA. A helical membrane pass occupies residues 323–343; it reads VILMLIHQFITFGFACTPLYF. At 344-364 the chain is on the cytoplasmic side; it reads VWEKVIGMHDTKSICLRALAR. The chain crosses the membrane as a helical span at residues 365-385; the sequence is LPIVVPIWFLAIIFPFFGPIN. Serine 386 is a topological domain (extracellular). The helical transmembrane segment at 387–407 threads the bilayer; it reads AVGALLVSFTVYIIPALAHIL. Topologically, residues 408–432 are cytoplasmic; the sequence is TYRTASARMNAAEKPPFFLPSWTGM. Residues 433-453 traverse the membrane as a helical segment; it reads FVLNMFIVVWVLVVGFGLGGW. The Extracellular segment spans residues 454-492; that stretch reads ASMVNFIRQIDTFGLFAKCYQCPKPAPALAQSPVPLPHH.

This sequence belongs to the amino acid/polyamine transporter 2 family. Amino acid/auxin permease (AAAP) (TC 2.A.18.1) subfamily.

The protein resides in the cell membrane. Carrier protein involved in proton-driven auxin influx. May mediate the formation of auxin gradient from developing leaves (site of auxin biosynthesis) to tips. This chain is Auxin transporter-like protein 1, found in Oryza sativa subsp. japonica (Rice).